A 173-amino-acid polypeptide reads, in one-letter code: Peptide deformylase (173 aa).

Residues cysteine 98 and histidine 140 each coordinate Fe cation. Glutamate 141 is an active-site residue. Histidine 144 is a binding site for Fe cation.

This sequence belongs to the polypeptide deformylase family. It depends on Fe(2+) as a cofactor.

It carries out the reaction N-terminal N-formyl-L-methionyl-[peptide] + H2O = N-terminal L-methionyl-[peptide] + formate. Its function is as follows. Removes the formyl group from the N-terminal Met of newly synthesized proteins. Requires at least a dipeptide for an efficient rate of reaction. N-terminal L-methionine is a prerequisite for activity but the enzyme has broad specificity at other positions. In Caulobacter vibrioides (strain ATCC 19089 / CIP 103742 / CB 15) (Caulobacter crescentus), this protein is Peptide deformylase.